The chain runs to 1471 residues: ABC multidrug transporter F (1471 aa).

Over residues 1–19 (MALNSTDNRWSTGEDTPSE) the composition is skewed to polar residues. The tract at residues 1 to 40 (MALNSTDNRWSTGEDTPSEAQLPDGEERLDAAPDEKVTAE) is disordered. Asparagine 4 carries an N-linked (GlcNAc...) asparagine glycan. Residues 25-40 (GEERLDAAPDEKVTAE) are compositionally biased toward basic and acidic residues. N-linked (GlcNAc...) asparagine glycans are attached at residues asparagine 71 and asparagine 311. Residues 133–387 (LKVPTMVRQA…FEQLGFQCPE (255 aa)) form the ABC transporter 1 domain. The chain crosses the membrane as a helical span at residues 498–518 (VTLAMLIGNFFEALIIASIFY). Asparagine 519 carries N-linked (GlcNAc...) asparagine glycosylation. The next 5 helical transmembrane spans lie at 532–552 (ALLF…ILTL), 578–598 (FIMS…TLYF), 607–627 (GPFF…SMFF), 641–661 (LAPS…TIPV), and 751–771 (IIIA…ELVA). The tract at residues 791-819 (RAKQGQRDEEQPSASAVPSEKYSEAPTPV) is disordered. In terms of domain architecture, ABC transporter 2 spans 829-1071 (FHWEDVCYDV…TLMDYFVRNG (243 aa)). N-linked (GlcNAc...) asparagine glycosylation occurs at asparagine 842. An ATP-binding site is contributed by 865 to 872 (GVSGAGKT). The next 5 membrane-spanning stretches (helical) occupy residues 1167–1187 (YLYS…FSFF), 1201–1221 (FGVF…IPTF), 1252–1272 (FAWN…PVGL), 1288–1308 (LVFL…HLLI), and 1326–1346 (IMMY…GFWI). 3 N-linked (GlcNAc...) asparagine glycosylation sites follow: asparagine 1386, asparagine 1422, and asparagine 1429. A helical membrane pass occupies residues 1441–1461 (FGLLWVYVAVNTFGAVFLYWL).

Belongs to the ABC transporter superfamily. ABCG family. PDR (TC 3.A.1.205) subfamily.

It is found in the cell membrane. It catalyses the reaction fluconazole(in) + ATP + H2O = fluconazole(out) + ADP + phosphate + H(+). The catalysed reaction is itraconazole(in) + ATP + H2O = itraconazole(out) + ADP + phosphate + H(+). With respect to regulation, the efflux inhibitor FK506 impairs the transport activity. In terms of biological role, pleiotropic ABC efflux transporter that shows a strong substrate specificity for the azole class of drugs such as lotrimazole (CLT), fluconazole (FLC), itraconazole (ITC), ketoconazole (KTC), posaconazole (POS), econazole (ECON), metconazole (MET), miconazole (MCZ), prochloraz (PCLZ), and tebuconazole (TEBZ). The polypeptide is ABC multidrug transporter F (Aspergillus fumigatus (strain ATCC MYA-4609 / CBS 101355 / FGSC A1100 / Af293) (Neosartorya fumigata)).